Here is a 475-residue protein sequence, read N- to C-terminus: C3a anaphylatoxin chemotactic receptor (475 aa).

Topologically, residues 1-23 (MESSSAETNSTGLHLEPQYQPET) are extracellular. An N-linked (GlcNAc...) asparagine glycan is attached at asparagine 9. The helical transmembrane segment at 24–46 (ILAMAILGLTFVLGLPGNGLVLW) threads the bilayer. The Cytoplasmic portion of the chain corresponds to 47 to 57 (VAGLKMRRTVN). A helical membrane pass occupies residues 58–80 (TVWFLHLTVADFVCCLSLPFSMA). Residues 81–96 (HLALRGYWPYGEILCK) are Extracellular-facing. A disulfide bridge connects residues cysteine 95 and cysteine 172. The helical transmembrane segment at 97–118 (FIPTVIIFNMFASVFLLTAISL) threads the bilayer. Over 119–139 (DRCLMVLKPIWCQNHRNVRTA) the chain is Cytoplasmic. A helical transmembrane segment spans residues 140–160 (CIICGCIWLVAFVLCIPVFVY). Residues 161 to 331 (RETFTLENHT…RLLKVITFTR (171 aa)) lie on the Extracellular side of the membrane. Asparagine 168 carries an N-linked (GlcNAc...) asparagine glycan. Tyrosine 174 and tyrosine 183 each carry sulfotyrosine. Asparagine 273 and asparagine 292 each carry an N-linked (GlcNAc...) asparagine glycan. A helical membrane pass occupies residues 332 to 351 (LVVGFLLPMIIMVACYTLII). The Cytoplasmic segment spans residues 352-368 (FRMRRVRVVKSWNKALH). A helical membrane pass occupies residues 369 to 391 (LAMVVVTIFLICWAPYHVFGVLI). Topologically, residues 392–408 (LFINPESRVGAALLSWD) are extracellular. A helical membrane pass occupies residues 409 to 429 (HVSIALASANSCFNPFLYALL). Over 430 to 475 (GRDLRKRVRQSMKGILEAAFSEDISKSTSFIQAKAFSEKHSLSTNV) the chain is Cytoplasmic. Position 450 is a phosphoserine (serine 450).

The protein belongs to the G-protein coupled receptor 1 family. In terms of assembly, interacts with VGF-derived peptide TLQP-21. Expressed in the heart, kidney, lung, liver, peritoneal macrophages and spleen.

It localises to the cell membrane. Its function is as follows. Receptor for the chemotactic and inflammatory peptide anaphylatoxin C3a. This receptor stimulates chemotaxis, granule enzyme release and superoxide anion production. The protein is C3a anaphylatoxin chemotactic receptor (C3AR1) of Cavia porcellus (Guinea pig).